A 170-amino-acid polypeptide reads, in one-letter code: Phosphopantetheine adenylyltransferase (170 aa).

Residue Thr17 coordinates substrate. ATP-binding positions include 17-18 (TF) and His25. The substrate site is built by Lys49, Leu81, and Arg95. ATP contacts are provided by residues 96 to 98 (GLR), Glu106, and 131 to 137 (LMYISST).

The protein belongs to the bacterial CoaD family. In terms of assembly, homohexamer. The cofactor is Mg(2+).

The protein localises to the cytoplasm. The catalysed reaction is (R)-4'-phosphopantetheine + ATP + H(+) = 3'-dephospho-CoA + diphosphate. It participates in cofactor biosynthesis; coenzyme A biosynthesis; CoA from (R)-pantothenate: step 4/5. Functionally, reversibly transfers an adenylyl group from ATP to 4'-phosphopantetheine, yielding dephospho-CoA (dPCoA) and pyrophosphate. The sequence is that of Phosphopantetheine adenylyltransferase from Legionella pneumophila subsp. pneumophila (strain Philadelphia 1 / ATCC 33152 / DSM 7513).